The chain runs to 150 residues: Histone deacetylase complex subunit SAP18 (150 aa).

The protein belongs to the SAP18 family. As to quaternary structure, forms a complex with SIN3 and histone deacetylase. Interacts with the N-terminal residues of TRL. Interacts with BCD; in vitro and yeast cells.

The protein localises to the nucleus. Its subcellular location is the cytoplasm. In terms of biological role, involved in the tethering of the SIN3 complex to core histone proteins. Interacts with bicoid (bcd) to repress transcription of bicoid target genes in the anterior tip of the embryo; a process known as retraction. Interacts with Trl and binds to Polycomb response elements at the bithorax complex. May contribute to the regulation of other homeotic gene expressions. This chain is Histone deacetylase complex subunit SAP18 (Bin1), found in Drosophila melanogaster (Fruit fly).